Consider the following 505-residue polypeptide: Argininosuccinate lyase (505 aa).

It belongs to the lyase 1 family. Argininosuccinate lyase subfamily.

It is found in the cytoplasm. The catalysed reaction is 2-(N(omega)-L-arginino)succinate = fumarate + L-arginine. The protein operates within amino-acid biosynthesis; L-arginine biosynthesis; L-arginine from L-ornithine and carbamoyl phosphate: step 3/3. The polypeptide is Argininosuccinate lyase (Rhodococcoides fascians (Rhodococcus fascians)).